An 87-amino-acid polypeptide reads, in one-letter code: U3-theraphotoxin-Hhn1g (87 aa).

Positions 1 to 24 (MVNMKASMFLTFAGLVLLFVVCFA) are cleaved as a signal peptide. The propeptide occupies 25 to 52 (SESEEKEFPKEMLSSIFAVDNDFKQEER). Disulfide bonds link cysteine 54-cysteine 67, cysteine 61-cysteine 72, and cysteine 66-cysteine 79.

Belongs to the neurotoxin 10 (Hwtx-1) family. 51 (Hntx-8) subfamily. Hntx-8 sub-subfamily. Expressed by the venom gland.

The protein localises to the secreted. Its function is as follows. Ion channel inhibitor. The protein is U3-theraphotoxin-Hhn1g of Cyriopagopus hainanus (Chinese bird spider).